Consider the following 380-residue polypeptide: Cytochrome b (380 aa).

4 consecutive transmembrane segments (helical) span residues 34–54 (FGSLLGICLLTQILTGLLLAA), 78–99 (WLLRNLHANGASFFFICIYLHI), 114–134 (WNTGVVLLLTLMATAFVGYVL), and 179–199 (FFALHFLLPFMIAGLTLIHLT). Positions 84 and 98 each coordinate heme b. Heme b-binding residues include His183 and His197. His202 contacts a ubiquinone. Transmembrane regions (helical) follow at residues 227-247 (LKDILGFMIMLLLLTTLALFH), 289-309 (LGGVLALAASVLILFLIPFLH), 321-341 (LSQLLFWLLVSNLFILTWIGS), and 348-368 (FIIIGQLASTTYFTIILVLFP).

This sequence belongs to the cytochrome b family. As to quaternary structure, the cytochrome bc1 complex contains 11 subunits: 3 respiratory subunits (MT-CYB, CYC1 and UQCRFS1), 2 core proteins (UQCRC1 and UQCRC2) and 6 low-molecular weight proteins (UQCRH/QCR6, UQCRB/QCR7, UQCRQ/QCR8, UQCR10/QCR9, UQCR11/QCR10 and a cleavage product of UQCRFS1). This cytochrome bc1 complex then forms a dimer. It depends on heme b as a cofactor.

The protein resides in the mitochondrion inner membrane. Component of the ubiquinol-cytochrome c reductase complex (complex III or cytochrome b-c1 complex) that is part of the mitochondrial respiratory chain. The b-c1 complex mediates electron transfer from ubiquinol to cytochrome c. Contributes to the generation of a proton gradient across the mitochondrial membrane that is then used for ATP synthesis. This chain is Cytochrome b (MT-CYB), found in Trogon curucui (Blue-crowned trogon).